Reading from the N-terminus, the 353-residue chain is Methionine import ATP-binding protein MetN (353 aa).

Residues 6–249 enclose the ABC transporter domain; that stretch reads LKNVDVDFPQ…PKQELTKKFV (244 aa). 41–48 serves as a coordination point for ATP; that stretch reads GFSGAGKS.

It belongs to the ABC transporter superfamily. Methionine importer (TC 3.A.1.24) family. As to quaternary structure, the complex is composed of two ATP-binding proteins (MetN), two transmembrane proteins (MetI) and a solute-binding protein (MetQ).

It localises to the cell membrane. It carries out the reaction L-methionine(out) + ATP + H2O = L-methionine(in) + ADP + phosphate + H(+). It catalyses the reaction D-methionine(out) + ATP + H2O = D-methionine(in) + ADP + phosphate + H(+). In terms of biological role, part of the ABC transporter complex MetNIQ involved in methionine import. Responsible for energy coupling to the transport system. The chain is Methionine import ATP-binding protein MetN from Lactobacillus acidophilus (strain ATCC 700396 / NCK56 / N2 / NCFM).